The sequence spans 223 residues: Kinetochore protein Spc25 (223 aa).

A coiled-coil region spans residues 51–116 (RHQRKVGKLQ…QRKNEIMERI (66 aa)).

Belongs to the SPC25 family. In terms of assembly, component of the Ndc80 complex, which is composed of Ndc80, Nuf2 and Spc25.

Its subcellular location is the nucleus. It localises to the chromosome. The protein localises to the centromere. It is found in the kinetochore. Acts as a component of the essential kinetochore-associated Ndc80 complex, which is required for chromosome segregation and spindle checkpoint activity during meiosis and mitosis. Required for kinetochore integrity and the organization of stable microtubule binding sites in the outer plate of the kinetochore. Participates in SAC signaling that responds specifically to disruptions in spindle microtubule dynamics. The NDC80 complex synergistically enhances the affinity of the SKA1 complex for microtubules and may allow the NDC80 complex to track depolymerizing microtubules. In Drosophila yakuba (Fruit fly), this protein is Kinetochore protein Spc25.